Here is a 477-residue protein sequence, read N- to C-terminus: tRNA-2-methylthio-N(6)-dimethylallyladenosine synthase (477 aa).

Residues 3 to 120 (KKLHIKTWGC…LPTMIKQVQE (118 aa)) enclose the MTTase N-terminal domain. [4Fe-4S] cluster is bound by residues C12, C49, C83, C157, C161, and C164. The Radical SAM core domain occupies 143–375 (RAEGATAFVS…QHVINNQSMQ (233 aa)). A TRAM domain is found at 378–441 (RAMLGSTQRI…PNSLRGKFLR (64 aa)).

It belongs to the methylthiotransferase family. MiaB subfamily. Monomer. [4Fe-4S] cluster serves as cofactor.

Its subcellular location is the cytoplasm. It carries out the reaction N(6)-dimethylallyladenosine(37) in tRNA + (sulfur carrier)-SH + AH2 + 2 S-adenosyl-L-methionine = 2-methylsulfanyl-N(6)-dimethylallyladenosine(37) in tRNA + (sulfur carrier)-H + 5'-deoxyadenosine + L-methionine + A + S-adenosyl-L-homocysteine + 2 H(+). Catalyzes the methylthiolation of N6-(dimethylallyl)adenosine (i(6)A), leading to the formation of 2-methylthio-N6-(dimethylallyl)adenosine (ms(2)i(6)A) at position 37 in tRNAs that read codons beginning with uridine. The chain is tRNA-2-methylthio-N(6)-dimethylallyladenosine synthase from Aeromonas hydrophila subsp. hydrophila (strain ATCC 7966 / DSM 30187 / BCRC 13018 / CCUG 14551 / JCM 1027 / KCTC 2358 / NCIMB 9240 / NCTC 8049).